Reading from the N-terminus, the 130-residue chain is uncharacterized protein (130 aa).

This is an uncharacterized protein from Acanthamoeba polyphaga mimivirus (APMV).